A 142-amino-acid polypeptide reads, in one-letter code: Hemoglobin subunit alpha (142 aa).

S1 bears the N-acetylserine mark. Residues 1–142 (SLTDKDKATV…VSLALSERYR (142 aa)) form the Globin domain. H59 contacts O2. H88 lines the heme b pocket.

The protein belongs to the globin family. Hb1 is a heterotetramer of two alpha chains and two beta-1 chains. Hb2 is a heterotetramer of two alpha chains and two beta-2 chains. Red blood cells.

In terms of biological role, involved in oxygen transport from gills to the various peripheral tissues. This chain is Hemoglobin subunit alpha (hba), found in Pseudaphritis urvillii (Congolli).